Reading from the N-terminus, the 639-residue chain is MRKDVVLLVGGAQGSGLETTMQVLAPAYASLGYGVLANREYFSNIVGRHSYIHIRVSSSGEARPLYYPADFLGAMDAETVFTHWDDIGEGAFLLYDLGTARMRLQQIASMEPDLRSRLMQQYREAGIEPFTVEKVVEYLEREKRVRVIGLSFTALFDVLIKKHGLSRAQAQRFRSSILIGAIAGLTSLDREALDLGLQRRFGSRPKVLEINRDFIASVADEVEKEYGAQLKLEPAEPKSGEYVVASGNDVVAMGKVVGGVRYQAYYPITPASDESVLLEEFEGLKIDGESLGSIAILQTEDEIAAVSSVIGAALTGARASTATSGPGFSLMVEALGWAGKNDVPMVITYYQRGGPSTGLPTRGSQSDLLFSLFASHGEFPRIILSSGDHLEAFYDAIEAYNLAERFQMPVIHLLDKFLANMVASVPFPDWKAIKIDRGKTLFKAPTGPFKRFPRDQPLADRPVLGSGAITWYTGDENDEYGHIDEDPVNRLVMYERRWKKMEIADREIPEDFRVKYYGDEDAEVLLVGWGSVKIPALEAIERLREMGVNAAYLHLRMLSPLPKRRVSEVLSRFDADRVIAVEANYLGQASKIVTMETGFMFRKYILKWTGRPVYLHELVEGVLDIVRNGRDKVVLSYGK.

Positions 266–270 (YPITP) match the YPITP motif motif. Positions 269 and 352 each coordinate substrate.

In terms of assembly, heterodimer composed of an alpha and a beta subunit.

It carries out the reaction a 2-oxocarboxylate + 2 oxidized [2Fe-2S]-[ferredoxin] + CoA = an acyl-CoA + 2 reduced [2Fe-2S]-[ferredoxin] + CO2 + H(+). Catalyzes the coenzyme A-dependent oxidative decarboxylation of different 2-oxoacids such as pyruvate, 2-oxobutyrate and glyoxylate to form their CoA derivatives. This Aeropyrum pernix (strain ATCC 700893 / DSM 11879 / JCM 9820 / NBRC 100138 / K1) protein is 2-oxoacid:ferredoxin oxidoreductase 1, subunit alpha.